A 224-amino-acid polypeptide reads, in one-letter code: Heme response regulator HssR (224 aa).

The Response regulatory domain maps to 3 to 116 (QCLVVDDDPR…ELIFRIRAVL (114 aa)). Asp-52 is subject to 4-aspartylphosphate. Positions 124–222 (NSEMTIGNLT…VRGQGYKVEN (99 aa)) form a DNA-binding region, ompR/PhoB-type.

In terms of processing, phosphorylated by HssS.

Its subcellular location is the cytoplasm. In terms of biological role, member of the two-component regulatory system HssS/HssR involved in intracellular heme homeostasis and tempering of staphylococcal virulence. Phosphorylated HssR binds to a direct repeat sequence within hrtAB promoter and activates the expression of hrtAB, an efflux pump, in response to extracellular heme, hemin, hemoglobin or blood. This chain is Heme response regulator HssR (hssR), found in Staphylococcus aureus (strain MRSA252).